The chain runs to 611 residues: Class E vacuolar protein-sorting machinery protein hse1 (611 aa).

The 130-residue stretch at Ala16–Gln145 folds into the VHS domain. Disordered regions lie at residues Gln140–Glu163 and Ala182–Ser211. Positions Gly151 to Glu163 are enriched in basic and acidic residues. The UIM domain occupies Lys162–Ile181. Positions Ala182–Pro195 are enriched in low complexity. The segment covering Val196–Ser211 has biased composition (polar residues). One can recognise an SH3 domain in the interval Ala216–Asp275. A disordered region spans residues Pro373–Arg611. 2 stretches are compositionally biased toward low complexity: residues Tyr388 to Pro397 and Ala452 to Pro472. The span at Thr480–Tyr492 shows a compositional bias: polar residues. Residues Ala509–Pro534 show a composition bias toward low complexity. A compositionally biased stretch (pro residues) spans Pro558–Pro575. Polar residues predominate over residues Tyr596–Arg611.

It belongs to the STAM family. In terms of assembly, component of the ESCRT-0 complex composed of HSE1 and VPS27.

Its subcellular location is the endosome membrane. Component of the ESCRT-0 complex which is the sorting receptor for ubiquitinated cargo proteins at the multivesicular body (MVB). The chain is Class E vacuolar protein-sorting machinery protein hse1 (hse1) from Aspergillus niger (strain ATCC MYA-4892 / CBS 513.88 / FGSC A1513).